The chain runs to 312 residues: Ribosomal protein L11 methyltransferase (312 aa).

S-adenosyl-L-methionine contacts are provided by Thr-160, Gly-181, Asp-203, and Asn-246.

This sequence belongs to the methyltransferase superfamily. PrmA family.

It localises to the cytoplasm. It catalyses the reaction L-lysyl-[protein] + 3 S-adenosyl-L-methionine = N(6),N(6),N(6)-trimethyl-L-lysyl-[protein] + 3 S-adenosyl-L-homocysteine + 3 H(+). Functionally, methylates ribosomal protein L11. The chain is Ribosomal protein L11 methyltransferase from Staphylococcus aureus (strain MRSA252).